The following is a 485-amino-acid chain: Chromosomal replication initiator protein DnaA (485 aa).

Positions 1-74 (MEKSKNIWSL…ILTNNGYDNV (74 aa)) are domain I, interacts with DnaA modulators. Positions 74 to 140 (VTIVFTNQSP…EEEPKNFKNP (67 aa)) are domain II. Residues 141–357 (FLKKRYTFEN…AAVTKLKAYI (217 aa)) form a domain III, AAA+ region region. Gly-185, Gly-187, Lys-188, and Thr-189 together coordinate ATP. A domain IV, binds dsDNA region spans residues 358-485 (DLDNIEIDID…TELMNKIKKN (128 aa)).

This sequence belongs to the DnaA family. In terms of assembly, oligomerizes as a right-handed, spiral filament on DNA at oriC.

The protein localises to the cytoplasm. Functionally, plays an essential role in the initiation and regulation of chromosomal replication. ATP-DnaA binds to the origin of replication (oriC) to initiate formation of the DNA replication initiation complex once per cell cycle. Binds the DnaA box (a 9 base pair repeat at the origin) and separates the double-stranded (ds)DNA. Forms a right-handed helical filament on oriC DNA; dsDNA binds to the exterior of the filament while single-stranded (ss)DNA is stabiized in the filament's interior. The ATP-DnaA-oriC complex binds and stabilizes one strand of the AT-rich DNA unwinding element (DUE), permitting loading of DNA polymerase. After initiation quickly degrades to an ADP-DnaA complex that is not apt for DNA replication. Binds acidic phospholipids. The polypeptide is Chromosomal replication initiator protein DnaA (Borreliella afzelii (strain PKo) (Borrelia afzelii)).